Consider the following 266-residue polypeptide: 2-hydroxyisocaproyl-CoA dehydratase activator (266 aa).

ATP contacts are provided by residues 10–14 (STASK) and 102–104 (GQD). A [4Fe-4S] cluster-binding site is contributed by Cys125. Asp134 lines the ATP pocket. Position 164 (Cys164) interacts with [4Fe-4S] cluster. Gly215 and Gln241 together coordinate ATP.

This sequence belongs to the HadI activator family. As to quaternary structure, homodimer. [4Fe-4S] cluster is required as a cofactor.

Its function is as follows. Involved in the reductive branch of L-leucine fermentation. Required for the activation of (R)-2-hydroxyisocaproyl-CoA dehydratase. The reduced activator transfers one electron to the dehydratase concomitant with hydrolysis of ATP. This protein is extremely sensitive towards oxygen. This is 2-hydroxyisocaproyl-CoA dehydratase activator from Clostridioides difficile (Peptoclostridium difficile).